We begin with the raw amino-acid sequence, 91 residues long: Small ribosomal subunit protein uS17 (91 aa).

It belongs to the universal ribosomal protein uS17 family. In terms of assembly, part of the 30S ribosomal subunit.

Its function is as follows. One of the primary rRNA binding proteins, it binds specifically to the 5'-end of 16S ribosomal RNA. The polypeptide is Small ribosomal subunit protein uS17 (Thermobifida fusca (strain YX)).